The sequence spans 159 residues: Phosphopantetheine adenylyltransferase (159 aa).

Serine 9 lines the substrate pocket. Residues serine 9–phenylalanine 10 and histidine 17 each bind ATP. Lysine 41, leucine 74, and lysine 88 together coordinate substrate. ATP contacts are provided by residues glycine 89–arginine 91, glutamate 99, and tyrosine 123–threonine 129.

This sequence belongs to the bacterial CoaD family. As to quaternary structure, homohexamer. It depends on Mg(2+) as a cofactor.

It is found in the cytoplasm. It catalyses the reaction (R)-4'-phosphopantetheine + ATP + H(+) = 3'-dephospho-CoA + diphosphate. The protein operates within cofactor biosynthesis; coenzyme A biosynthesis; CoA from (R)-pantothenate: step 4/5. Its function is as follows. Reversibly transfers an adenylyl group from ATP to 4'-phosphopantetheine, yielding dephospho-CoA (dPCoA) and pyrophosphate. The sequence is that of Phosphopantetheine adenylyltransferase from Arthrobacter sp. (strain FB24).